The sequence spans 363 residues: Protein-arginine kinase (363 aa).

Residues 24–254 enclose the Phosphagen kinase C-terminal domain; it reads IVLSSRIRLA…AQLIEQERSA (231 aa). Residue 27-31 participates in ATP binding; that stretch reads SSRIR. A phosphoarginine; by autocatalysis mark is found at Arg-29, Arg-40, and Arg-86. ATP contacts are provided by residues His-92, Arg-125, and 176-180; that span reads RASVM. A Phosphoarginine; by autocatalysis modification is found at Arg-190. 207–212 contacts ATP; sequence RGIYGE. Phosphoarginine; by autocatalysis is present on residues Arg-255, Arg-269, and Arg-272. Residues 337–342 carry the RDXXRA motif of the pArg binding pocket involved in allosteric regulation motif; that stretch reads RDIRRA. Phosphoarginine; by autocatalysis is present on Arg-346.

Belongs to the ATP:guanido phosphotransferase family. As to quaternary structure, interacts with CtsR in its autophosphorylated form. Interacts with McsA in nonstressed as well as in heat-stressed cells, whereas strongly interacts with ClpC only in nonstressed cells. Post-translationally, autophosphorylated on Arg residues. Phosphorylation on Arg-40 and Arg-86 are up-regulated upon stress conditions.

The protein localises to the cytoplasm. It carries out the reaction L-arginyl-[protein] + ATP = N(omega)-phospho-L-arginyl-[protein] + ADP + H(+). Appears to be allosterically activated by the binding of pArg-containing polypeptides to the pArg-binding pocket localized in the C-terminal domain of McsB. The McsB kinase is inhibited in nonstressed cells by direct interaction with ClpC; upon heat exposure, the interaction of McsB with ClpC is dramatically decreased, leading to McsB release and activation during heat stress. Its kinase activity is counteracted by the protein-arginine-phosphatase YwlE in vivo. Requires McsA for full kinase activity. Functionally, catalyzes the specific phosphorylation of arginine residues in a large number of proteins. Is part of the bacterial stress response system, where it is involved in regulating the global heat shock repressor CtsR; phosphorylates arginine residues in the winged helix-turn-helix domain of CtsR, thereby preventing its binding to DNA and consequently inducing the expression of repressed genes. The transcriptional repressor HrcA, the chaperone GroEL, the unfoldase ClpC, together with several ribosomal subunits, represent other physiological targets of McsB under stress conditions. Protein arginine phosphorylation has a physiologically important role and is involved in the regulation of many critical cellular processes, such as protein homeostasis, motility, competence, and stringent and stress responses, by regulating gene expression and protein activity. Functions as an adapter whose kinase activity is required for ClpCP-mediated degradation of CtsR during heat stress. Is required for the delocalization of competence proteins from the cell poles, probably via a role in the degradation of anchor proteins. The chain is Protein-arginine kinase from Bacillus subtilis (strain 168).